The sequence spans 412 residues: Maintenance of mitochondrial morphology protein 1 (412 aa).

At Met1–Gly19 the chain is on the lumenal side. Residues Leu20–Phe40 traverse the membrane as a helical segment. Residues Gly41–Thr412 are Cytoplasmic-facing. One can recognise an SMP-LTD domain in the interval Gln121–Pro337. The segment covering Ala372–Arg384 has biased composition (basic and acidic residues). A disordered region spans residues Ala372–Thr412.

It belongs to the MMM1 family. In terms of assembly, homodimer. Component of the ER-mitochondria encounter structure (ERMES) or MDM complex, composed of MMM1, MDM10, MDM12 and MDM34. An MMM1 homodimer associates with one molecule of MDM12 on each side in a pairwise head-to-tail manner, and the SMP-LTD domains of MMM1 and MDM12 generate a continuous hydrophobic tunnel for phospholipid trafficking.

The protein resides in the endoplasmic reticulum membrane. Its function is as follows. Component of the ERMES/MDM complex, which serves as a molecular tether to connect the endoplasmic reticulum (ER) and mitochondria. Components of this complex are involved in the control of mitochondrial shape and protein biogenesis, and function in nonvesicular lipid trafficking between the ER and mitochondria. The MDM12-MMM1 subcomplex functions in the major beta-barrel assembly pathway that is responsible for biogenesis of all outer membrane beta-barrel proteins, and acts in a late step after the SAM complex. The MDM10-MDM12-MMM1 subcomplex further acts in the TOM40-specific pathway after the action of the MDM12-MMM1 complex. Essential for establishing and maintaining the structure of mitochondria and maintenance of mtDNA nucleoids. The protein is Maintenance of mitochondrial morphology protein 1 of Podospora anserina (strain S / ATCC MYA-4624 / DSM 980 / FGSC 10383) (Pleurage anserina).